The chain runs to 537 residues: Inositol phosphorylceramide glucuronosyltransferase 1 (537 aa).

Residues 6–26 form a helical membrane-spanning segment; sequence TSLWVLLLALVSIQLNGSFGS. Mn(2+) contacts are provided by Asp124 and Asp126. Substrate contacts are provided by residues 124–126, 153–155, 180–184, and 248–255; these read DAD, NSG, TGGDQ, and HYTLGPLK. His248 contributes to the Mn(2+) binding site. 5 helical membrane-spanning segments follow: residues 293-313, 375-395, 406-426, 468-488, and 494-514; these read DELVVKFLFLLPLCALLFCIY, VSVVVCFTAVLLSLGISFAIV, VLVYEWTFTIFFLLFGVFLLF, MAFLAIAAVSLPYILGITALF, and MVGLAIILAAFMTYASEHLAV.

Belongs to the glycosyltransferase 8 family. Glycogenin subfamily. Requires Mn(2+) as cofactor. Expressed in seedlings, roots, leaves, stems and siliques.

The protein resides in the golgi apparatus membrane. It catalyses the reaction glucuronate acceptor + UDP-alpha-D-glucuronate = acceptor beta-D-glucuronoside + UDP + H(+). The enzyme catalyses a 1D-myo-inositol-1-phospho-N-[(R)-2-hydroxy-very-long-chain fatty acyl]-(R)-4-hydroxysphingoid base + UDP-alpha-D-glucuronate = an alpha-D-glucuronosyl-(1&lt;-&gt;6)-1D-myo-inositol-1-phospho-N-[(R)-2-hydroxy-very-long-chain fatty acyl]-(R)-4-hydroxysphingoid base + UDP + H(+). It participates in sphingolipid metabolism. In terms of biological role, mediates the transfer of glucuronic acid (GlcA) from UDP-GlcA to glycosyl inositol phosphorylceramides (GIPCs). The formation of GIPCs sphingolipids is essential for pollen function, plant growth and defense. Required for global fitness. The sequence is that of Inositol phosphorylceramide glucuronosyltransferase 1 from Arabidopsis thaliana (Mouse-ear cress).